Here is a 384-residue protein sequence, read N- to C-terminus: S-adenosylmethionine synthase (384 aa).

His15 lines the ATP pocket. Residue Asp17 participates in Mg(2+) binding. Glu43 lines the K(+) pocket. L-methionine-binding residues include Glu56 and Gln99. The tract at residues 99-109 (QSPDINQGVDK) is flexible loop. ATP is bound by residues 164–166 (DAK), 230–231 (RF), Asp239, 245–246 (RK), Ala262, and Lys266. Residue Asp239 coordinates L-methionine. Position 270 (Lys270) interacts with L-methionine.

It belongs to the AdoMet synthase family. Homotetramer; dimer of dimers. Mg(2+) is required as a cofactor. K(+) serves as cofactor.

It is found in the cytoplasm. It catalyses the reaction L-methionine + ATP + H2O = S-adenosyl-L-methionine + phosphate + diphosphate. The protein operates within amino-acid biosynthesis; S-adenosyl-L-methionine biosynthesis; S-adenosyl-L-methionine from L-methionine: step 1/1. In terms of biological role, catalyzes the formation of S-adenosylmethionine (AdoMet) from methionine and ATP. The overall synthetic reaction is composed of two sequential steps, AdoMet formation and the subsequent tripolyphosphate hydrolysis which occurs prior to release of AdoMet from the enzyme. In Vibrio vulnificus (strain YJ016), this protein is S-adenosylmethionine synthase.